A 438-amino-acid polypeptide reads, in one-letter code: Serine hydroxymethyltransferase (438 aa).

Residues Leu133 and 137-139 each bind (6S)-5,6,7,8-tetrahydrofolate; that span reads GHL. Lys242 carries the N6-(pyridoxal phosphate)lysine modification.

The protein belongs to the SHMT family. As to quaternary structure, homodimer. Requires pyridoxal 5'-phosphate as cofactor.

The protein resides in the cytoplasm. The catalysed reaction is (6R)-5,10-methylene-5,6,7,8-tetrahydrofolate + glycine + H2O = (6S)-5,6,7,8-tetrahydrofolate + L-serine. It participates in one-carbon metabolism; tetrahydrofolate interconversion. Its pathway is amino-acid biosynthesis; glycine biosynthesis; glycine from L-serine: step 1/1. Its function is as follows. Catalyzes the reversible interconversion of serine and glycine with tetrahydrofolate (THF) serving as the one-carbon carrier. This reaction serves as the major source of one-carbon groups required for the biosynthesis of purines, thymidylate, methionine, and other important biomolecules. Also exhibits THF-independent aldolase activity toward beta-hydroxyamino acids, producing glycine and aldehydes, via a retro-aldol mechanism. This chain is Serine hydroxymethyltransferase, found in Brucella abortus (strain S19).